We begin with the raw amino-acid sequence, 97 residues long: Large ribosomal subunit protein bL31 (97 aa).

Residues 76 to 97 are disordered; sequence KTPKKAKGKTEEYTKHRSLNEL. The segment covering 83-97 has biased composition (basic and acidic residues); it reads GKTEEYTKHRSLNEL.

This sequence belongs to the bacterial ribosomal protein bL31 family. Type A subfamily. In terms of assembly, part of the 50S ribosomal subunit.

In terms of biological role, binds the 23S rRNA. This Mycoplasma pneumoniae (strain ATCC 29342 / M129 / Subtype 1) (Mycoplasmoides pneumoniae) protein is Large ribosomal subunit protein bL31.